A 62-amino-acid polypeptide reads, in one-letter code: Zinc metalloproteinase-disintegrin-like BaG (62 aa).

The 31-residue stretch at 24–54 folds into the Peptidase M12B domain; sequence KTDLLNRSHDNAQLSPINLVVAVIMAHEMGH. N-linked (GlcNAc...) asparagine glycosylation occurs at asparagine 29. Histidine 50 contributes to the Zn(2+) binding site. Glutamate 51 is a catalytic residue. Residue histidine 54 coordinates Zn(2+).

Belongs to the venom metalloproteinase (M12B) family. P-III subfamily. P-IIIc sub-subfamily. Dimer. Zn(2+) serves as cofactor. Post-translationally, the N-terminus is blocked. As to expression, expressed by the venom gland.

It localises to the secreted. Its activity is regulated as follows. Inhibited by EDTA, and 1,10-phenanthroline. Snake venom Zinc metalloproteinase that inhibits ADP-induced platelet aggregation and inhibits the alpha-5/beta-1 (ITGA5/ITGB1) integrin, a fibronectin receptor. Has caseinolytic activity. Induces the detachment of cells that are bound to fibronectin. In Bothrops alternatus (Urutu), this protein is Zinc metalloproteinase-disintegrin-like BaG.